The chain runs to 226 residues: MISLKIYFVLIFLFLKGINSAYVSNEEGETVDFTFSGFYANLTYPNEISELNYVEGNYLSTRIVRFNGSFYCDTTILSETNNVTGSCYVANCANDTVLEICDSGKEVHFTDMSGTTWSADTFTENLYWFCGGDGNKPNMTTAAAMNSDIDSYYVYGNWTIDTADSTVADYTCNYTHFQEAGDIEKGDVYTASADSSDSSSASSTIFKPSYFISCLLSVGLYLVLNF.

Residues 1–20 (MISLKIYFVLIFLFLKGINS) form the signal peptide. A heme binding region spans residues 72 to 101 (CDTTILSETNNVTGSCYVANCANDTVLEIC). S199 carries GPI-anchor amidated serine lipidation. Residues 200-226 (SASSTIFKPSYFISCLLSVGLYLVLNF) constitute a propeptide, removed in mature form.

It localises to the cell membrane. The protein resides in the vacuole membrane. In terms of biological role, high affinity heme transporter involved in the assimilation of exogenous heme during conditions of low cellular iron. This is High affinity heme transporter from Schizosaccharomyces pombe (strain 972 / ATCC 24843) (Fission yeast).